We begin with the raw amino-acid sequence, 604 residues long: Aspartate--tRNA(Asp/Asn) ligase (604 aa).

Glu-175 is a binding site for L-aspartate. An aspartate region spans residues 199–202; the sequence is QMFK. Residues Arg-221 and His-451 each coordinate L-aspartate. Position 221 to 223 (221 to 223) interacts with ATP; sequence RDE. Glu-485 contributes to the ATP binding site. Arg-492 contacts L-aspartate. 537–540 is a binding site for ATP; sequence GIDR.

The protein belongs to the class-II aminoacyl-tRNA synthetase family. Type 1 subfamily. Homodimer.

The protein localises to the cytoplasm. The catalysed reaction is tRNA(Asx) + L-aspartate + ATP = L-aspartyl-tRNA(Asx) + AMP + diphosphate. Functionally, aspartyl-tRNA synthetase with relaxed tRNA specificity since it is able to aspartylate not only its cognate tRNA(Asp) but also tRNA(Asn). Reaction proceeds in two steps: L-aspartate is first activated by ATP to form Asp-AMP and then transferred to the acceptor end of tRNA(Asp/Asn). In Erythrobacter litoralis (strain HTCC2594), this protein is Aspartate--tRNA(Asp/Asn) ligase.